An 829-amino-acid chain; its full sequence is pre-rRNA 2'-O-ribose RNA methyltransferase FTSJ3 (829 aa).

Positions 56, 58, 76, 92, and 117 each coordinate S-adenosyl-L-methionine. The active-site Proton acceptor is the Lys-157. A disordered region spans residues 332-367 (ISLSSEEEGDEEESAAETKQASEEEEEREEEEQLNR). Phosphoserine occurs at positions 333, 335, 336, 345, and 353. Residues 336-346 (SEEEGDEEESA) are compositionally biased toward acidic residues. Residues 354–363 (EEEEEREEEE) are compositionally biased toward acidic residues. Arg-389 carries the citrulline modification. 2 disordered regions span residues 443–508 (FLSD…PLLV) and 528–634 (DGFS…GFEV). The segment covering 456 to 473 (DAEDDDDTSLESDLDPEE) has biased composition (acidic residues). A phosphoserine mark is found at Ser-531 and Ser-544. Residue Lys-570 forms a Glycyl lysine isopeptide (Lys-Gly) (interchain with G-Cter in SUMO2) linkage. Ser-575 bears the Phosphoserine mark. Residues Lys-626 and Lys-642 each participate in a glycyl lysine isopeptide (Lys-Gly) (interchain with G-Cter in SUMO2) cross-link. Ser-659 is modified (phosphoserine). Residue Lys-661 forms a Glycyl lysine isopeptide (Lys-Gly) (interchain with G-Cter in SUMO2) linkage. The residue at position 671 (Ser-671) is a Phosphoserine. Lys-693 participates in a covalent cross-link: Glycyl lysine isopeptide (Lys-Gly) (interchain with G-Cter in SUMO2). Positions 722–760 (IKKVAEAKARKKRRMLKKLEQTKKKAEAVVNTVDISERE) form a coiled coil. Residue Arg-766 is modified to Citrulline. A compositionally biased stretch (basic residues) spans 794-804 (VRRPAGVRGHF). The disordered stretch occupies residues 794 to 829 (VRRPAGVRGHFKVVDSRMKKDQRAQRKEQKRNHRRK). A compositionally biased stretch (basic and acidic residues) spans 805 to 820 (KVVDSRMKKDQRAQRK).

This sequence belongs to the class I-like SAM-binding methyltransferase superfamily. RNA methyltransferase RlmE family. SPB1 subfamily. As to quaternary structure, interacts with NIP7. Post-translationally, citrullinated by PADI4.

The protein resides in the nucleus. It is found in the nucleolus. The catalysed reaction is a ribonucleotide in rRNA + S-adenosyl-L-methionine = a 2'-O-methylribonucleotide in rRNA + S-adenosyl-L-homocysteine + H(+). Functionally, RNA 2'-O-methyltransferase involved in the processing of the 34S pre-rRNA to 18S rRNA and in 40S ribosomal subunit formation. In Rattus norvegicus (Rat), this protein is pre-rRNA 2'-O-ribose RNA methyltransferase FTSJ3 (Ftsj3).